The chain runs to 363 residues: MTAVQKIKVLCVDDSALIRSLMTEIINSQPDMTVCATAPDPLVARELIKQHNPDVLTLDVEMPRMDGLDFLEKLMRLRPMPVVMVSSLTERGSEITLRALELGAVDFVTKPRVGIRDGMLDYAEKLADKIRAASRARVRQAPQPQAVARAADSHPAAPMINNPLVSTEKLIIIGASTGGTEAIREVLTPLPPDAPAVLIAQHMPPGFTKSFAQRLNGLCRIAVKEAEHGERVLPGHAYIAPGHAHLLLARSGANYIAQLSDEPPVNRHRPSVDVLFRSAATHAGKNAIGVILTGMGRDGAAGLLEMKRAGAHTFAQDEASCIVFGMPREAIALGGADEIVPLAEMSRRVMARLATMGDRVQRV.

The Response regulatory domain maps to 8 to 125 (KVLCVDDSAL…RDGMLDYAEK (118 aa)). At Asp59 the chain carries 4-aspartylphosphate. The CheB-type methylesterase domain occupies 164–356 (LVSTEKLIII…RRVMARLATM (193 aa)). Catalysis depends on residues Ser176, His202, and Asp298.

This sequence belongs to the CheB family. Phosphorylated by CheA. Phosphorylation of the N-terminal regulatory domain activates the methylesterase activity.

The protein resides in the cytoplasm. It carries out the reaction [protein]-L-glutamate 5-O-methyl ester + H2O = L-glutamyl-[protein] + methanol + H(+). The enzyme catalyses L-glutaminyl-[protein] + H2O = L-glutamyl-[protein] + NH4(+). In terms of biological role, involved in chemotaxis. Part of a chemotaxis signal transduction system that modulates chemotaxis in response to various stimuli. Catalyzes the demethylation of specific methylglutamate residues introduced into the chemoreceptors (methyl-accepting chemotaxis proteins or MCP) by CheR. Also mediates the irreversible deamidation of specific glutamine residues to glutamic acid. The protein is Protein-glutamate methylesterase/protein-glutamine glutaminase 3 of Burkholderia lata (strain ATCC 17760 / DSM 23089 / LMG 22485 / NCIMB 9086 / R18194 / 383).